A 309-amino-acid chain; its full sequence is Ribonuclease Z (309 aa).

7 residues coordinate Zn(2+): His63, His65, Asp67, His68, His145, Asp216, and His274. Asp67 functions as the Proton acceptor in the catalytic mechanism.

Belongs to the RNase Z family. Homodimer. The cofactor is Zn(2+).

It carries out the reaction Endonucleolytic cleavage of RNA, removing extra 3' nucleotides from tRNA precursor, generating 3' termini of tRNAs. A 3'-hydroxy group is left at the tRNA terminus and a 5'-phosphoryl group is left at the trailer molecule.. Zinc phosphodiesterase, which displays some tRNA 3'-processing endonuclease activity. Probably involved in tRNA maturation, by removing a 3'-trailer from precursor tRNA. The chain is Ribonuclease Z from Streptococcus pyogenes serotype M1.